Here is a 615-residue protein sequence, read N- to C-terminus: Protein DlpA (615 aa).

Belongs to the isocitrate and isopropylmalate dehydrogenases family. This sequence to M.jannaschii MJ0644 in the C-terminal section.

This Legionella pneumophila subsp. pneumophila (strain Philadelphia 1 / ATCC 33152 / DSM 7513) protein is Protein DlpA (dlpA).